The primary structure comprises 194 residues: Peptidyl-tRNA hydrolase (194 aa).

Tyr17 lines the tRNA pocket. His22 serves as the catalytic Proton acceptor. 3 residues coordinate tRNA: Tyr69, Asn71, and Asn117.

It belongs to the PTH family. As to quaternary structure, monomer.

It is found in the cytoplasm. The enzyme catalyses an N-acyl-L-alpha-aminoacyl-tRNA + H2O = an N-acyl-L-amino acid + a tRNA + H(+). Hydrolyzes ribosome-free peptidyl-tRNAs (with 1 or more amino acids incorporated), which drop off the ribosome during protein synthesis, or as a result of ribosome stalling. Its function is as follows. Catalyzes the release of premature peptidyl moieties from peptidyl-tRNA molecules trapped in stalled 50S ribosomal subunits, and thus maintains levels of free tRNAs and 50S ribosomes. The polypeptide is Peptidyl-tRNA hydrolase (Arthrobacter sp. (strain FB24)).